A 189-amino-acid chain; its full sequence is Thymidine kinase (189 aa).

Residues 9-16 and 85-88 each bind ATP; these read GTMNSGKT and DESQ. The active-site Proton acceptor is glutamate 86. Zn(2+) is bound by residues cysteine 143, cysteine 146, cysteine 180, and histidine 183.

Belongs to the thymidine kinase family. As to quaternary structure, homotetramer.

The protein resides in the cytoplasm. The enzyme catalyses thymidine + ATP = dTMP + ADP + H(+). The protein is Thymidine kinase of Streptococcus pyogenes serotype M18 (strain MGAS8232).